Consider the following 488-residue polypeptide: GTPase Der (488 aa).

EngA-type G domains lie at 3–166 (PVVA…AEAM) and 200–373 (IKLA…DSAT). Residues 9–16 (GRPNVGKS), 56–60 (DTGGI), 118–121 (NKVD), 206–213 (GKPNVGKS), 253–257 (DTAGV), and 318–321 (NKWD) contribute to the GTP site. In terms of domain architecture, KH-like spans 374 to 458 (RRVSTSMLTR…PIQLRFHEGD (85 aa)).

It belongs to the TRAFAC class TrmE-Era-EngA-EngB-Septin-like GTPase superfamily. EngA (Der) GTPase family. Associates with the 50S ribosomal subunit.

GTPase that plays an essential role in the late steps of ribosome biogenesis. This chain is GTPase Der, found in Shewanella amazonensis (strain ATCC BAA-1098 / SB2B).